The following is a 167-amino-acid chain: Small ribosomal subunit protein uS5 (167 aa).

The 64-residue stretch at 11 to 74 (LQEKLIAVNR…EKARRNMINV (64 aa)) folds into the S5 DRBM domain.

This sequence belongs to the universal ribosomal protein uS5 family. In terms of assembly, part of the 30S ribosomal subunit. Contacts proteins S4 and S8.

Its function is as follows. With S4 and S12 plays an important role in translational accuracy. Located at the back of the 30S subunit body where it stabilizes the conformation of the head with respect to the body. The polypeptide is Small ribosomal subunit protein uS5 (Escherichia coli O139:H28 (strain E24377A / ETEC)).